Here is a 382-residue protein sequence, read N- to C-terminus: UDP-4-amino-4-deoxy-L-arabinose--oxoglutarate aminotransferase (382 aa).

Lysine 183 carries the N6-(pyridoxal phosphate)lysine modification.

The protein belongs to the DegT/DnrJ/EryC1 family. ArnB subfamily. Homodimer. It depends on pyridoxal 5'-phosphate as a cofactor.

The catalysed reaction is UDP-4-amino-4-deoxy-beta-L-arabinose + 2-oxoglutarate = UDP-beta-L-threo-pentopyranos-4-ulose + L-glutamate. The protein operates within nucleotide-sugar biosynthesis; UDP-4-deoxy-4-formamido-beta-L-arabinose biosynthesis; UDP-4-deoxy-4-formamido-beta-L-arabinose from UDP-alpha-D-glucuronate: step 2/3. It participates in bacterial outer membrane biogenesis; lipopolysaccharide biosynthesis. Functionally, catalyzes the conversion of UDP-4-keto-arabinose (UDP-Ara4O) to UDP-4-amino-4-deoxy-L-arabinose (UDP-L-Ara4N). The modified arabinose is attached to lipid A and is required for resistance to polymyxin and cationic antimicrobial peptides. The chain is UDP-4-amino-4-deoxy-L-arabinose--oxoglutarate aminotransferase from Pseudomonas aeruginosa (strain UCBPP-PA14).